The following is a 468-amino-acid chain: ATP synthase subunit beta (468 aa).

Glycine 155–threonine 162 provides a ligand contact to ATP.

Belongs to the ATPase alpha/beta chains family. F-type ATPases have 2 components, CF(1) - the catalytic core - and CF(0) - the membrane proton channel. CF(1) has five subunits: alpha(3), beta(3), gamma(1), delta(1), epsilon(1). CF(0) has three main subunits: a(1), b(2) and c(9-12). The alpha and beta chains form an alternating ring which encloses part of the gamma chain. CF(1) is attached to CF(0) by a central stalk formed by the gamma and epsilon chains, while a peripheral stalk is formed by the delta and b chains.

The protein resides in the cell membrane. The catalysed reaction is ATP + H2O + 4 H(+)(in) = ADP + phosphate + 5 H(+)(out). Its function is as follows. Produces ATP from ADP in the presence of a proton gradient across the membrane. The catalytic sites are hosted primarily by the beta subunits. In Streptococcus thermophilus (strain CNRZ 1066), this protein is ATP synthase subunit beta.